A 419-amino-acid chain; its full sequence is Tol-Pal system protein TolB (419 aa).

Positions 1 to 19 (MFNRIISLFLLLFTGQVIA) are cleaved as a signal peptide.

It belongs to the TolB family. In terms of assembly, the Tol-Pal system is composed of five core proteins: the inner membrane proteins TolA, TolQ and TolR, the periplasmic protein TolB and the outer membrane protein Pal. They form a network linking the inner and outer membranes and the peptidoglycan layer.

The protein resides in the periplasm. Functionally, part of the Tol-Pal system, which plays a role in outer membrane invagination during cell division and is important for maintaining outer membrane integrity. The protein is Tol-Pal system protein TolB of Legionella pneumophila (strain Corby).